A 919-amino-acid polypeptide reads, in one-letter code: uncharacterized protein (919 aa).

Residues 1 to 15 are compositionally biased toward low complexity; that stretch reads MEALILLSSQQSGSI. Disordered stretches follow at residues 1 to 167, 179 to 312, 415 to 491, 553 to 739, 751 to 863, and 883 to 906; these read MEAL…DLEN, RFKP…STPS, HIYE…RLSL, QQQQ…TIKP, THNE…NNII, and LNINHQDGPNSASSTPRLPTDHIN. The span at 16–25 shows a compositional bias: polar residues; the sequence is KNNCASTSDI. Low complexity-rich tracts occupy residues 34–75, 96–107, and 141–153; these read IVIV…SSSS, SSPSSSPNTPKT, and TPTTTSTSTTPIK. The segment covering 154–167 has biased composition (basic and acidic residues); sequence PVKDPKEKEKDLEN. A compositionally biased stretch (low complexity) spans 186–292; that stretch reads NNTNNNNNIN…QQSSPTSSQT (107 aa). A compositionally biased stretch (polar residues) spans 420–433; sequence PNENNNGGSFQKPN. Low complexity-rich tracts occupy residues 450–471, 553–564, 573–589, and 618–635; these read GVSGSPSHSPRVSQSPRVPSHP, QQQQQQQQQSSS, SQPQNSSSPRQPSQTPQ, and HMPQSPHMPHSPHLMPHS. Residues 678–695 show a composition bias toward polar residues; that stretch reads YGSSPNLNGGKGSNNFLQ. Over residues 712–723 the composition is skewed to low complexity; it reads SSVDSYSNSSPT. The span at 754 to 768 shows a compositional bias: polar residues; that stretch reads ENYMSSPRQPLSPHN. The span at 785–797 shows a compositional bias: basic and acidic residues; it reads PHEHCNYIDKNDE. The segment covering 798–863 has biased composition (low complexity); sequence YYSNNNNNNN…NNNNNNNNII (66 aa). Over residues 883-899 the composition is skewed to polar residues; sequence LNINHQDGPNSASSTPR.

This is an uncharacterized protein from Dictyostelium discoideum (Social amoeba).